The chain runs to 431 residues: Histidinol dehydrogenase (431 aa).

3 residues coordinate NAD(+): Tyr130, Gln191, and Asn214. Residues Ser237, Gln261, and His264 each coordinate substrate. Residues Gln261 and His264 each contribute to the Zn(2+) site. Active-site proton acceptor residues include Glu329 and His330. His330, Asp363, Glu417, and His422 together coordinate substrate. Asp363 provides a ligand contact to Zn(2+). A Zn(2+)-binding site is contributed by His422.

The protein belongs to the histidinol dehydrogenase family. Requires Zn(2+) as cofactor.

It carries out the reaction L-histidinol + 2 NAD(+) + H2O = L-histidine + 2 NADH + 3 H(+). Its pathway is amino-acid biosynthesis; L-histidine biosynthesis; L-histidine from 5-phospho-alpha-D-ribose 1-diphosphate: step 9/9. Catalyzes the sequential NAD-dependent oxidations of L-histidinol to L-histidinaldehyde and then to L-histidine. The sequence is that of Histidinol dehydrogenase from Psychrobacter arcticus (strain DSM 17307 / VKM B-2377 / 273-4).